The sequence spans 206 residues: Small ribosomal subunit protein uS4 (206 aa).

The 63-residue stretch at 96-158 (SRLDNVVYRM…AKKQSRIKAA (63 aa)) folds into the S4 RNA-binding domain.

It belongs to the universal ribosomal protein uS4 family. Part of the 30S ribosomal subunit. Contacts protein S5. The interaction surface between S4 and S5 is involved in control of translational fidelity.

Functionally, one of the primary rRNA binding proteins, it binds directly to 16S rRNA where it nucleates assembly of the body of the 30S subunit. In terms of biological role, with S5 and S12 plays an important role in translational accuracy. This Wigglesworthia glossinidia brevipalpis protein is Small ribosomal subunit protein uS4.